The sequence spans 281 residues: Large ribosomal subunit protein uL2 (281 aa).

Residues Ala-208 to Arg-281 are disordered. Residues Thr-254–Arg-281 show a composition bias toward basic residues.

The protein belongs to the universal ribosomal protein uL2 family. Part of the 50S ribosomal subunit. Forms a bridge to the 30S subunit in the 70S ribosome.

One of the primary rRNA binding proteins. Required for association of the 30S and 50S subunits to form the 70S ribosome, for tRNA binding and peptide bond formation. It has been suggested to have peptidyltransferase activity; this is somewhat controversial. Makes several contacts with the 16S rRNA in the 70S ribosome. In Limosilactobacillus fermentum (strain NBRC 3956 / LMG 18251) (Lactobacillus fermentum), this protein is Large ribosomal subunit protein uL2.